Consider the following 393-residue polypeptide: SET domain-containing protein DDB_G0283443 (393 aa).

The SET domain occupies 17 to 312 (KKIEINETLE…KGDELSISYI (296 aa)).

Belongs to the class V-like SAM-binding methyltransferase superfamily.

In terms of biological role, probable methyltransferase. This is SET domain-containing protein DDB_G0283443 from Dictyostelium discoideum (Social amoeba).